Consider the following 1026-residue polypeptide: Multidrug resistance protein MdtC (1026 aa).

12 consecutive transmembrane segments (helical) span residues valine 12–leucine 32, glutamate 333–leucine 353, alanine 360–cysteine 380, leucine 387–leucine 407, valine 431–leucine 451, phenylalanine 463–proline 483, tryptophan 528–proline 548, leucine 853–serine 873, valine 875–leucine 895, tryptophan 897–valine 917, proline 953–glycine 973, and isoleucine 984–valine 1004.

It belongs to the resistance-nodulation-cell division (RND) (TC 2.A.6) family. MdtC subfamily. As to quaternary structure, part of a tripartite efflux system composed of MdtA, MdtB and MdtC. MdtC forms a heteromultimer with MdtB.

The protein resides in the cell inner membrane. The polypeptide is Multidrug resistance protein MdtC (Pectobacterium carotovorum subsp. carotovorum (strain PC1)).